The primary structure comprises 817 residues: Leucine--tRNA ligase (817 aa).

The 'HIGH' region motif lies at 51 to 61 (PYPSGDLHVGH). Positions 588–592 (RMSKS) match the 'KMSKS' region motif. Residue Lys591 participates in ATP binding.

The protein belongs to the class-I aminoacyl-tRNA synthetase family.

The protein resides in the cytoplasm. It carries out the reaction tRNA(Leu) + L-leucine + ATP = L-leucyl-tRNA(Leu) + AMP + diphosphate. The polypeptide is Leucine--tRNA ligase (Rubrobacter xylanophilus (strain DSM 9941 / JCM 11954 / NBRC 16129 / PRD-1)).